The primary structure comprises 100 residues: Large ribosomal subunit protein uL23 (100 aa).

This sequence belongs to the universal ribosomal protein uL23 family. As to quaternary structure, part of the 50S ribosomal subunit. Contacts protein L29, and trigger factor when it is bound to the ribosome.

In terms of biological role, one of the early assembly proteins it binds 23S rRNA. One of the proteins that surrounds the polypeptide exit tunnel on the outside of the ribosome. Forms the main docking site for trigger factor binding to the ribosome. The chain is Large ribosomal subunit protein uL23 from Dechloromonas aromatica (strain RCB).